A 224-amino-acid chain; its full sequence is Phosphoribosylformylglycinamidine synthase subunit PurQ (224 aa).

Residues 3 to 224 (FGVVVFPGSN…GLLEKVVALA (222 aa)) form the Glutamine amidotransferase type-1 domain. Residue cysteine 86 is the Nucleophile of the active site. Active-site residues include histidine 195 and glutamate 197.

Part of the FGAM synthase complex composed of 1 PurL, 1 PurQ and 2 PurS subunits.

The protein resides in the cytoplasm. The catalysed reaction is N(2)-formyl-N(1)-(5-phospho-beta-D-ribosyl)glycinamide + L-glutamine + ATP + H2O = 2-formamido-N(1)-(5-O-phospho-beta-D-ribosyl)acetamidine + L-glutamate + ADP + phosphate + H(+). The enzyme catalyses L-glutamine + H2O = L-glutamate + NH4(+). It participates in purine metabolism; IMP biosynthesis via de novo pathway; 5-amino-1-(5-phospho-D-ribosyl)imidazole from N(2)-formyl-N(1)-(5-phospho-D-ribosyl)glycinamide: step 1/2. Functionally, part of the phosphoribosylformylglycinamidine synthase complex involved in the purines biosynthetic pathway. Catalyzes the ATP-dependent conversion of formylglycinamide ribonucleotide (FGAR) and glutamine to yield formylglycinamidine ribonucleotide (FGAM) and glutamate. The FGAM synthase complex is composed of three subunits. PurQ produces an ammonia molecule by converting glutamine to glutamate. PurL transfers the ammonia molecule to FGAR to form FGAM in an ATP-dependent manner. PurS interacts with PurQ and PurL and is thought to assist in the transfer of the ammonia molecule from PurQ to PurL. In Nostoc sp. (strain PCC 7120 / SAG 25.82 / UTEX 2576), this protein is Phosphoribosylformylglycinamidine synthase subunit PurQ.